The primary structure comprises 350 residues: DNA-directed RNA polymerase subunit alpha (350 aa).

The interval 1 to 226 (MLISQRPTLS…ELFGLARELN (226 aa)) is alpha N-terminal domain (alpha-NTD). The segment at 241-350 (ADQAAHFALP…NQDYAETEQL (110 aa)) is alpha C-terminal domain (alpha-CTD). Residues 328-350 (GTWNSDAGYDLEDNQDYAETEQL) form a disordered region. The span at 336–350 (YDLEDNQDYAETEQL) shows a compositional bias: acidic residues.

Belongs to the RNA polymerase alpha chain family. As to quaternary structure, homodimer. The RNAP catalytic core consists of 2 alpha, 1 beta, 1 beta' and 1 omega subunit. When a sigma factor is associated with the core the holoenzyme is formed, which can initiate transcription.

It catalyses the reaction RNA(n) + a ribonucleoside 5'-triphosphate = RNA(n+1) + diphosphate. In terms of biological role, DNA-dependent RNA polymerase catalyzes the transcription of DNA into RNA using the four ribonucleoside triphosphates as substrates. This Mycolicibacterium vanbaalenii (strain DSM 7251 / JCM 13017 / BCRC 16820 / KCTC 9966 / NRRL B-24157 / PYR-1) (Mycobacterium vanbaalenii) protein is DNA-directed RNA polymerase subunit alpha.